Here is a 934-residue protein sequence, read N- to C-terminus: 2-oxoglutarate dehydrogenase E1 component (934 aa).

The span at 515-537 (RAAQDKIDKSDKMDNPDMERPES) shows a compositional bias: basic and acidic residues. Residues 515–544 (RAAQDKIDKSDKMDNPDMERPESLQEPLQS) form a disordered region.

It belongs to the alpha-ketoglutarate dehydrogenase family. In terms of assembly, homodimer. Part of the 2-oxoglutarate dehydrogenase (OGDH) complex composed of E1 (2-oxoglutarate dehydrogenase), E2 (dihydrolipoamide succinyltransferase) and E3 (dihydrolipoamide dehydrogenase); the complex contains multiple copies of the three enzymatic components (E1, E2 and E3). The cofactor is thiamine diphosphate.

It catalyses the reaction N(6)-[(R)-lipoyl]-L-lysyl-[protein] + 2-oxoglutarate + H(+) = N(6)-[(R)-S(8)-succinyldihydrolipoyl]-L-lysyl-[protein] + CO2. In terms of biological role, E1 component of the 2-oxoglutarate dehydrogenase (OGDH) complex which catalyzes the decarboxylation of 2-oxoglutarate, the first step in the conversion of 2-oxoglutarate to succinyl-CoA and CO(2). This Staphylococcus haemolyticus (strain JCSC1435) protein is 2-oxoglutarate dehydrogenase E1 component.